The following is a 513-amino-acid chain: MLLAELAEVSRAVAATPARLEKVALLSEALRRLAPDERAVGASWLAGDLAGGRVGIGAATLRAALEAAPPGAAGPGLTVGEVDAALRRIAAAAGPGSGAARRRELDALLARAGDPERRFLAALVLGELRQGALEGVLSDAVARVAGLPGAEVRRAAMLAGALPPVAEAALAEGAAGLARFRLRVGEPVSPMLAQTAAGVDEALRALGGEAALEWKLDGARIQAHRDGDEVRVFSRSLREVTAAVPEVVALLRAAPEPLLVLDGEAIALRADGTPEPFQVTMRRFGRKLDVERLAPDLPLTAFFFDALVAGGGELLGAPERERWAALERAIPAERRVPRLVTGDAAEARAFLEEALARGQEGVVAKALDAPYEAGRRGAAWLKVKRAHTLDLVVLAAEWGSGRRRGWLSNLHLGARDPATGEFVMLGKTFKGMTDAMLAWQTERLKALATGPLDAWQVPVRPELVVEVAFDGIQASPRYPGGLALRFARVKRYREDKRPEDADTIETVRGLYGG.

Glu-213 provides a ligand contact to ATP. The active-site N6-AMP-lysine intermediate is Lys-215. Residues Arg-220, Arg-235, Glu-264, Phe-304, Arg-376, and Lys-382 each contribute to the ATP site.

The protein belongs to the ATP-dependent DNA ligase family. Mg(2+) serves as cofactor.

It catalyses the reaction ATP + (deoxyribonucleotide)n-3'-hydroxyl + 5'-phospho-(deoxyribonucleotide)m = (deoxyribonucleotide)n+m + AMP + diphosphate.. DNA ligase that seals nicks in double-stranded DNA during DNA replication, DNA recombination and DNA repair. The sequence is that of Probable DNA ligase from Anaeromyxobacter sp. (strain K).